A 456-amino-acid polypeptide reads, in one-letter code: Zinc finger C2HC domain-containing protein 1C (456 aa).

Disordered stretches follow at residues 16–46 (MLPH…QSLK) and 85–113 (YPHC…SSGP). 2 stretches are compositionally biased toward polar residues: residues 35–46 (YEQGDSSQQSLK) and 90–102 (GISQ…DSQG). The stretch at 211–265 (VQIRRLEAAGESLEEEIRRKQILLRGKLKKTEEELRRIQTQKEQAKENENGELQK) forms a coiled coil. The interval 336–388 (NKIRDPVSEPSVEKFSPPSETPVGALQGSARNSSLSMAPDSSGSSGSIEEPQL) is disordered. Residues 368-382 (SSLSMAPDSSGSSGS) are compositionally biased toward low complexity. The segment at 387–416 (QLGECSHCGRKFLSFRLERHSNICSRMRGS) adopts a C2HC/C3H-type zinc-finger fold. Zn(2+) contacts are provided by cysteine 391, cysteine 394, histidine 406, and cysteine 410.

The protein belongs to the ZC2HC1 family. It depends on Zn(2+) as a cofactor.

The polypeptide is Zinc finger C2HC domain-containing protein 1C (ZC2HC1C) (Homo sapiens (Human)).